The chain runs to 396 residues: Lipid-A-disaccharide synthase (396 aa).

Belongs to the LpxB family.

The catalysed reaction is a lipid X + a UDP-2-N,3-O-bis[(3R)-3-hydroxyacyl]-alpha-D-glucosamine = a lipid A disaccharide + UDP + H(+). The protein operates within bacterial outer membrane biogenesis; LPS lipid A biosynthesis. Functionally, condensation of UDP-2,3-diacylglucosamine and 2,3-diacylglucosamine-1-phosphate to form lipid A disaccharide, a precursor of lipid A, a phosphorylated glycolipid that anchors the lipopolysaccharide to the outer membrane of the cell. This chain is Lipid-A-disaccharide synthase, found in Nitrobacter winogradskyi (strain ATCC 25391 / DSM 10237 / CIP 104748 / NCIMB 11846 / Nb-255).